The chain runs to 172 residues: 6,7-dimethyl-8-ribityllumazine synthase (172 aa).

5-amino-6-(D-ribitylamino)uracil contacts are provided by residues phenylalanine 24, 58 to 60 (ALE), and 82 to 84 (AVI). Position 87–88 (87–88 (ET)) interacts with (2S)-2-hydroxy-3-oxobutyl phosphate. Residue histidine 90 is the Proton donor of the active site. Asparagine 115 contacts 5-amino-6-(D-ribitylamino)uracil. Arginine 129 provides a ligand contact to (2S)-2-hydroxy-3-oxobutyl phosphate. Residues 150 to 172 (ALDQLGDDDEDEEEDEDDEEERA) form a disordered region. Over residues 154–172 (LGDDDEDEEEDEDDEEERA) the composition is skewed to acidic residues.

This sequence belongs to the DMRL synthase family.

It carries out the reaction (2S)-2-hydroxy-3-oxobutyl phosphate + 5-amino-6-(D-ribitylamino)uracil = 6,7-dimethyl-8-(1-D-ribityl)lumazine + phosphate + 2 H2O + H(+). It functions in the pathway cofactor biosynthesis; riboflavin biosynthesis; riboflavin from 2-hydroxy-3-oxobutyl phosphate and 5-amino-6-(D-ribitylamino)uracil: step 1/2. In terms of biological role, catalyzes the formation of 6,7-dimethyl-8-ribityllumazine by condensation of 5-amino-6-(D-ribitylamino)uracil with 3,4-dihydroxy-2-butanone 4-phosphate. This is the penultimate step in the biosynthesis of riboflavin. This chain is 6,7-dimethyl-8-ribityllumazine synthase, found in Burkholderia multivorans (strain ATCC 17616 / 249).